Reading from the N-terminus, the 250-residue chain is Phosphoribosylaminoimidazole-succinocarboxamide synthase (250 aa).

Belongs to the SAICAR synthetase family.

It carries out the reaction 5-amino-1-(5-phospho-D-ribosyl)imidazole-4-carboxylate + L-aspartate + ATP = (2S)-2-[5-amino-1-(5-phospho-beta-D-ribosyl)imidazole-4-carboxamido]succinate + ADP + phosphate + 2 H(+). Its pathway is purine metabolism; IMP biosynthesis via de novo pathway; 5-amino-1-(5-phospho-D-ribosyl)imidazole-4-carboxamide from 5-amino-1-(5-phospho-D-ribosyl)imidazole-4-carboxylate: step 1/2. The sequence is that of Phosphoribosylaminoimidazole-succinocarboxamide synthase from Chloroflexus aggregans (strain MD-66 / DSM 9485).